Consider the following 350-residue polypeptide: Transmembrane protein 115 (350 aa).

Residues 1 to 19 (MQRALPGARQHLGAILASA) lie on the Cytoplasmic side of the membrane. Residues 1–205 (MQRALPGARQ…FGLLSSWVYL (205 aa)) are mediates homooligomerization. The helical transmembrane segment at 20–40 (SVVVKALCAVVLFLYLLSFAV) threads the bilayer. The Lumenal portion of the chain corresponds to 41–97 (DTGCLAVTPGYLFPPNFWIWTLATHGLMEQHVWDVAISLATVVVAGRLLEPLWGALE). Residues 98–118 (LLIFFSVVNVSVGLLGALAYL) traverse the membrane as a helical segment. Topologically, residues 119-126 (LTYMASFN) are cytoplasmic. A helical transmembrane segment spans residues 127-147 (LVYLFTIRIHGALGFLGGVLV). Residues 148 to 165 (ALKQTMGDCVVLRVPQVR) lie on the Lumenal side of the membrane. A helical membrane pass occupies residues 166-186 (VSVVPMLLLALLLLLRLATLL). Residues 187-350 (QSPALASYGF…LITLETAPLL (164 aa)) are Cytoplasmic-facing. Residues 206 to 229 (RFYQRHSRGRGDMADHFAFATFFP) are mediates localization to the Golgi. A disordered region spans residues 299–350 (EDQSAWPSMDDDEEEAGAKTDSPLPLEEASTPPGKVTVPESSLITLETAPLL). Thr-329 bears the Phosphothreonine mark.

The protein belongs to the TMEM115 family. As to quaternary structure, homooligomer. Interacts with COPB1. May interact with LMAN1. Interacts with the COG complex; probably through COG3.

The protein localises to the golgi apparatus. It is found in the golgi stack membrane. Functionally, may play a role in retrograde transport of proteins from the Golgi to the endoplasmic reticulum. May indirectly play a role in protein glycosylation in the Golgi. This is Transmembrane protein 115 from Mus musculus (Mouse).